Reading from the N-terminus, the 261-residue chain is 5'-nucleotidase SurE (261 aa).

The a divalent metal cation site is built by Asp8, Asp9, Ser39, and Asn94.

The protein belongs to the SurE nucleotidase family. A divalent metal cation serves as cofactor.

It localises to the cytoplasm. It catalyses the reaction a ribonucleoside 5'-phosphate + H2O = a ribonucleoside + phosphate. Nucleotidase that shows phosphatase activity on nucleoside 5'-monophosphates. The protein is 5'-nucleotidase SurE of Archaeoglobus fulgidus (strain ATCC 49558 / DSM 4304 / JCM 9628 / NBRC 100126 / VC-16).